A 216-amino-acid polypeptide reads, in one-letter code: Thymidine kinase (216 aa).

ATP-binding positions include 9-16 and 86-89; these read GTMDCGKS and DEAQ. The active-site Proton acceptor is Glu-87.

Belongs to the thymidine kinase family. In terms of assembly, homotetramer.

The protein localises to the cytoplasm. It catalyses the reaction thymidine + ATP = dTMP + ADP + H(+). The chain is Thymidine kinase from Streptomyces coelicolor (strain ATCC BAA-471 / A3(2) / M145).